A 527-amino-acid chain; its full sequence is FAD-dependent monooxygenase CTB5 (527 aa).

One can recognise an FAD-binding PCMH-type domain in the interval 78 to 255; it reads SDLHPSCIAL…TAVTLKTFGQ (178 aa).

Belongs to the oxygen-dependent FAD-linked oxidoreductase family.

The protein operates within mycotoxin biosynthesis. FAD-dependent monooxygenase; part of the gene cluster that mediates the biosynthesis of cercosporin, a light-activated, non-host-selective toxin. The perylenequinone chromophore of cercosporin absorbs light energy to attain an electronically-activated triplet state and produces active oxygen species such as the hydroxyl radical, superoxide, hydrogen peroxide or singlet oxygen upon reaction with oxygen molecules. These reactive oxygen species cause damage to various cellular components including lipids, proteins and nucleic acids. The first step of cercosporin biosynthesis is performed by the polyketide synthase CTB1 which catalyzes the formation of nor-toralactone. The starter unit acyltransferase (SAT) domain of CTB1 initiates polyketide extension by the selective utilization of acetyl-CoA, which is elongated to the heptaketide in the beta-ketoacyl synthase (KS) domain by successive condensations with six malonyl units introduced by the malonyl acyltransferase (MAT) domain. The product template (PT) domain catalyzes C4-C9 and C2-C11 aldol cyclizations and dehydrations to a trihydroxynaphthalene, which is thought to be delivered to the thioesterase (TE) domain for product release. The bifunctional enzyme CTB3 then methylates nor-toralactone to toralactone before conducting an unusual oxidative aromatic ring opening. The O-methyltransferase CTB2 further methylates the nascent OH-6 of the CBT3 product, blocking further oxidation at this site before the reductase CTB6 reduces the 2-oxopropyl ketone at position C7, giving naphthalene. The FAD-dependent monooxygenase CTB5 in concert with the multicopper oxidase CTB12 are responsible for homodimerization of naphthalene with CTB7 installing the dioxepine moiety, finally producing cercosporin. The fasciclin domain-containing protein CTB11 might act with CTB5 and CTB12 whereas the roles of CTB9 and CTB10 have still to be elucidated. This chain is FAD-dependent monooxygenase CTB5, found in Cercospora beticola (Sugarbeet leaf spot fungus).